A 414-amino-acid polypeptide reads, in one-letter code: Collagenase (414 aa).

The protein belongs to the peptidase U32 family. Homodimer. A metal cation is required as a cofactor.

Has collagenase activity. Hydrolyzes type I collagen. May play a role in virulence. The polypeptide is Collagenase (prtC) (Porphyromonas gingivalis (strain ATCC BAA-308 / W83)).